We begin with the raw amino-acid sequence, 87 residues long: UPF0250 protein ESA_02696 (87 aa).

It belongs to the UPF0250 family.

The protein is UPF0250 protein ESA_02696 of Cronobacter sakazakii (strain ATCC BAA-894) (Enterobacter sakazakii).